Consider the following 860-residue polypeptide: Leucine--tRNA ligase (860 aa).

The short motif at 42–52 is the 'HIGH' region element; that stretch reads PYPSGRLHMGH. The 'KMSKS' region signature appears at 619–623; the sequence is KMSKS. Position 622 (lysine 622) interacts with ATP.

The protein belongs to the class-I aminoacyl-tRNA synthetase family.

The protein resides in the cytoplasm. It carries out the reaction tRNA(Leu) + L-leucine + ATP = L-leucyl-tRNA(Leu) + AMP + diphosphate. This Escherichia coli O45:K1 (strain S88 / ExPEC) protein is Leucine--tRNA ligase.